Here is a 180-residue protein sequence, read N- to C-terminus: Large ribosomal subunit protein uL6 (180 aa).

It belongs to the universal ribosomal protein uL6 family. Part of the 50S ribosomal subunit.

Its function is as follows. This protein binds to the 23S rRNA, and is important in its secondary structure. It is located near the subunit interface in the base of the L7/L12 stalk, and near the tRNA binding site of the peptidyltransferase center. The sequence is that of Large ribosomal subunit protein uL6 from Bdellovibrio bacteriovorus (strain ATCC 15356 / DSM 50701 / NCIMB 9529 / HD100).